The sequence spans 115 residues: Nitrogenase-stabilizing/protective protein NifW (115 aa).

It belongs to the NifW family. In terms of assembly, homotrimer; associates with NifD.

Functionally, may protect the nitrogenase Fe-Mo protein from oxidative damage. The protein is Nitrogenase-stabilizing/protective protein NifW of Stutzerimonas stutzeri (strain A1501) (Pseudomonas stutzeri).